We begin with the raw amino-acid sequence, 566 residues long: Proline--tRNA ligase (566 aa).

It belongs to the class-II aminoacyl-tRNA synthetase family. ProS type 1 subfamily. Homodimer.

The protein localises to the cytoplasm. The catalysed reaction is tRNA(Pro) + L-proline + ATP = L-prolyl-tRNA(Pro) + AMP + diphosphate. Its function is as follows. Catalyzes the attachment of proline to tRNA(Pro) in a two-step reaction: proline is first activated by ATP to form Pro-AMP and then transferred to the acceptor end of tRNA(Pro). As ProRS can inadvertently accommodate and process non-cognate amino acids such as alanine and cysteine, to avoid such errors it has two additional distinct editing activities against alanine. One activity is designated as 'pretransfer' editing and involves the tRNA(Pro)-independent hydrolysis of activated Ala-AMP. The other activity is designated 'posttransfer' editing and involves deacylation of mischarged Ala-tRNA(Pro). The misacylated Cys-tRNA(Pro) is not edited by ProRS. This is Proline--tRNA ligase from Shouchella clausii (strain KSM-K16) (Alkalihalobacillus clausii).